Consider the following 162-residue polypeptide: NADH-quinone oxidoreductase subunit I (162 aa).

2 consecutive 4Fe-4S ferredoxin-type domains span residues Leu-52–Gly-82 and Thr-93–Asn-122. [4Fe-4S] cluster-binding residues include Cys-62, Cys-65, Cys-68, Cys-72, Cys-102, Cys-105, Cys-108, and Cys-112.

The protein belongs to the complex I 23 kDa subunit family. NDH-1 is composed of 14 different subunits. Subunits NuoA, H, J, K, L, M, N constitute the membrane sector of the complex. [4Fe-4S] cluster serves as cofactor.

Its subcellular location is the cell inner membrane. The catalysed reaction is a quinone + NADH + 5 H(+)(in) = a quinol + NAD(+) + 4 H(+)(out). Its function is as follows. NDH-1 shuttles electrons from NADH, via FMN and iron-sulfur (Fe-S) centers, to quinones in the respiratory chain. The immediate electron acceptor for the enzyme in this species is believed to be ubiquinone. Couples the redox reaction to proton translocation (for every two electrons transferred, four hydrogen ions are translocated across the cytoplasmic membrane), and thus conserves the redox energy in a proton gradient. The polypeptide is NADH-quinone oxidoreductase subunit I (Methylorubrum populi (strain ATCC BAA-705 / NCIMB 13946 / BJ001) (Methylobacterium populi)).